The following is a 551-amino-acid chain: Glucans biosynthesis protein D (551 aa).

Residues 1 to 32 (MNRRRFIKGSMAMAAVCGSSGIASLFSQAAFA) constitute a signal peptide (tat-type signal).

Belongs to the OpgD/OpgG family. Post-translationally, predicted to be exported by the Tat system. The position of the signal peptide cleavage has not been experimentally proven.

The protein resides in the periplasm. Its pathway is glycan metabolism; osmoregulated periplasmic glucan (OPG) biosynthesis. Its function is as follows. Probably involved in the control of the structural glucose backbone of osmoregulated periplasmic glucans (OPGs). The protein is Glucans biosynthesis protein D (mdoD) of Salmonella typhimurium (strain LT2 / SGSC1412 / ATCC 700720).